Reading from the N-terminus, the 628-residue chain is Kinesin-like protein subito (628 aa).

The segment at 28–68 is disordered; that stretch reads RFRPRPNKKMRLFDNIQESEEESFSEYSDTESEYKYQSSEA. The span at 44–58 shows a compositional bias: acidic residues; the sequence is QESEEESFSEYSDTE. Residues 87–479 enclose the Kinesin motor domain; sequence GPQVFLRLRP…LNFASIAKNI (393 aa). 169–176 contacts ATP; it reads GTSGSGKT. A coiled-coil region spans residues 509-612; that stretch reads DYTKELEDEN…KNPASDTDIS (104 aa). The segment at 596 to 628 is disordered; that stretch reads KDEIEELKNPASDTDISDDPNESKSPIEILDDD. At Ser-607 the chain carries Phosphoserine. Phosphothreonine is present on Thr-609. Phosphoserine is present on Ser-612.

This sequence belongs to the TRAFAC class myosin-kinesin ATPase superfamily. Kinesin family.

It localises to the cytoplasm. The protein localises to the cytoskeleton. In terms of biological role, required during female meiosis for bipolar spindle formation in the absence of the centrosomes and chromosome homolog segregation. Also has roles in male meiosis and mitotic divisions of the early embryo. This is Kinesin-like protein subito (sub) from Drosophila melanogaster (Fruit fly).